The sequence spans 438 residues: Transcriptional regulator Mb0495 (438 aa).

Residues 1 to 12 (MYSTNRTSQSLS) show a composition bias toward polar residues. A disordered region spans residues 1–22 (MYSTNRTSQSLSRKPGRKHQLR). A DNA-binding region (H-T-H motif) is located at residues 52-73 (VGRDVIAGSTSLSIATVNRQVI).

This sequence belongs to the ROK (NagC/XylR) family.

In terms of biological role, positively regulates the expression of PE13 and PPE18. The protein is Transcriptional regulator Mb0495 of Mycobacterium bovis (strain ATCC BAA-935 / AF2122/97).